Consider the following 233-residue polypeptide: Large ribosomal subunit protein uL1 (233 aa).

This sequence belongs to the universal ribosomal protein uL1 family. In terms of assembly, part of the 50S ribosomal subunit.

In terms of biological role, binds directly to 23S rRNA. The L1 stalk is quite mobile in the ribosome, and is involved in E site tRNA release. Protein L1 is also a translational repressor protein, it controls the translation of the L11 operon by binding to its mRNA. This chain is Large ribosomal subunit protein uL1, found in Syntrophotalea carbinolica (strain DSM 2380 / NBRC 103641 / GraBd1) (Pelobacter carbinolicus).